Consider the following 1538-residue polypeptide: Arf-GAP with Rho-GAP domain, ANK repeat and PH domain-containing protein 3 (1538 aa).

One can recognise an SAM domain in the interval 4 to 68 (PQDLDIAVWL…LRLLRAGSAE (65 aa)). Disordered stretches follow at residues 72-97 (DSHLDNTMEPTPSPAPDAQPPKPVPK), 125-149 (SRNSECTQRSSPLLPSSSEQPSVPN), and 215-242 (ASDRRDGRGVCQERAEHRQDLETREDAG). A compositionally biased stretch (pro residues) spans 82–97 (TPSPAPDAQPPKPVPK). The span at 216–241 (SDRRDGRGVCQERAEHRQDLETREDA) shows a compositional bias: basic and acidic residues. PH domains lie at 282-374 (VPLL…SCLK) and 389-478 (RPLR…EAVT). The Arf-GAP domain maps to 479 to 606 (ETLSDYEVAE…LFRKPHPRHP (128 aa)). 2 PH domains span residues 671–785 (ATYR…FSPL) and 795–901 (LLRM…AGGG). The Rho-GAP domain occupies 903-1084 (TGLQEQQMSR…ELIDGYISVF (182 aa)). The region spanning 1113 to 1206 (GDLIMEVYIE…ASLLLRKVSM (94 aa)) is the Ras-associating domain. The PH 5 domain maps to 1219–1321 (ESPRVGLLRC…WTTSILKAQH (103 aa)). At Thr1344 the chain carries Phosphothreonine. Tyr1399 and Tyr1404 each carry phosphotyrosine. Polar residues predominate over residues 1425–1439 (WSAKSDPSLTSQRSF). The segment at 1425–1538 (WSAKSDPSLT…SNPPSSQPLT (114 aa)) is disordered. Phosphoserine is present on residues Ser1438 and Ser1474. Composition is skewed to low complexity over residues 1476-1486 (EEQLLQELNNL) and 1494-1505 (ASCPESSSQPTS). A compositionally biased stretch (pro residues) spans 1506-1529 (PQAPSPTSLPTPTPSLPTQPPCTS).

As to quaternary structure, interacts (via SAM domain) with INPPL1/SHIP2. In terms of processing, tyrosine phosphorylated at a low basal level. PDGF treatment stimulates phosphorylation. Tyrosine phosphorylation is increased in cells that are in the process of becoming attached to a substrate and that start spreading and flattening.

It localises to the cytoplasm. The protein localises to the cell membrane. Its subcellular location is the cytoskeleton. The protein resides in the cell projection. It is found in the lamellipodium. It localises to the ruffle. Functionally, phosphatidylinositol 3,4,5-trisphosphate-dependent GTPase-activating protein that modulates actin cytoskeleton remodeling by regulating ARF and RHO family members. Is activated by phosphatidylinositol 3,4,5-trisphosphate (PtdIns(3,4,5)P3) binding. Can be activated by phosphatidylinositol 3,4-bisphosphate (PtdIns(3,4,5)P2) binding, albeit with lower efficiency. Acts preferentially on ARF5 and on RHOA. The protein is Arf-GAP with Rho-GAP domain, ANK repeat and PH domain-containing protein 3 (Arap3) of Mus musculus (Mouse).